The chain runs to 113 residues: Subtilisin inhibitor-like protein 15 (113 aa).

2 cysteine pairs are disulfide-bonded: C31–C46 and C71–C101.

This sequence belongs to the protease inhibitor I16 (SSI) family. As to quaternary structure, homodimer.

It localises to the secreted. Its function is as follows. Inhibitor of subtilisin BPN'. The chain is Subtilisin inhibitor-like protein 15 from Streptomyces bikiniensis.